Reading from the N-terminus, the 243-residue chain is 6-carboxyhexanoate--CoA ligase (243 aa).

This sequence belongs to the BioW family. In terms of assembly, homodimer. Requires Mg(2+) as cofactor.

The enzyme catalyses heptanedioate + ATP + CoA = 6-carboxyhexanoyl-CoA + AMP + diphosphate. Its pathway is metabolic intermediate metabolism; pimeloyl-CoA biosynthesis; pimeloyl-CoA from pimelate: step 1/1. Catalyzes the transformation of pimelate into pimeloyl-CoA with concomitant hydrolysis of ATP to AMP. The sequence is that of 6-carboxyhexanoate--CoA ligase from Thermocrinis albus (strain DSM 14484 / JCM 11386 / HI 11/12).